The following is a 299-amino-acid chain: Taste receptor type 2 member 4 (299 aa).

Over 1–9 the chain is Extracellular; the sequence is MLRLFYFSA. A helical transmembrane segment spans residues 10–30; it reads IIASVILNFVGIIMNLFITVV. The Cytoplasmic portion of the chain corresponds to 31–46; the sequence is NCKTWVKSHRISSSDR. Residues 47-67 form a helical membrane-spanning segment; that stretch reads ILFSLGITRFLMLGLFLVNTI. At 68 to 81 the chain is on the extracellular side; it reads YFVSSNXERSVYLS. The helical transmembrane segment at 82–102 threads the bilayer; that stretch reads AFFVLCFMFLDSSSLWFVTLL. Over 103 to 131 the chain is Cytoplasmic; sequence NILYCVKITNFQHSVFLLLKRNISPKIPR. Residues 132 to 152 traverse the membrane as a helical segment; sequence LLLACVLISAFTTCLYITLSQ. At 153–172 the chain is on the extracellular side; it reads ASPFPELVTTRNNTSFNINE. N-linked (GlcNAc...) asparagine glycans are attached at residues Asn164 and Asn165. A helical membrane pass occupies residues 173 to 193; the sequence is GILSLVVSLVLSSSLQFIINV. At 194 to 230 the chain is on the cytoplasmic side; the sequence is TSASLLIHSLRRHIQKMQKNATGFWNPQTEAHVGAMK. Residues 231 to 251 traverse the membrane as a helical segment; sequence LMVYFLILYIPYSVATLVQYL. Topologically, residues 252 to 262 are extracellular; it reads PFYAGMDMGTK. A helical membrane pass occupies residues 263-283; sequence SICLIFATLYSPGHSVLIIIT. Residues 284–299 lie on the Cytoplasmic side of the membrane; that stretch reads HPKLKTTAKKILCFKK.

Belongs to the G-protein coupled receptor T2R family.

Its subcellular location is the membrane. It is found in the cell projection. The protein resides in the cilium membrane. Functionally, gustducin-coupled receptor implicated in the perception of bitter compounds in the oral cavity and the gastrointestinal tract. Signals through PLCB2 and the calcium-regulated cation channel TRPM5. In airway epithelial cells, binding of denatonium increases the intracellular calcium ion concentration and stimulates ciliary beat frequency. The protein is Taste receptor type 2 member 4 (TAS2R4) of Pan troglodytes (Chimpanzee).